Consider the following 446-residue polypeptide: Adenylosuccinate synthetase (446 aa).

Residues 21-27 (GDEGKGK) and 49-51 (GHT) each bind GTP. The Proton acceptor role is filled by Asp22. Residues Asp22 and Gly49 each contribute to the Mg(2+) site. Residues 22–25 (DEGK), 47–50 (NAGH), Thr141, Arg155, Gln236, Thr251, and Arg319 contribute to the IMP site. His50 functions as the Proton donor in the catalytic mechanism. 315–321 (VTTGRSR) lines the substrate pocket. GTP contacts are provided by residues Arg321, 347 to 349 (KLD), and 429 to 431 (STS).

Belongs to the adenylosuccinate synthetase family. As to quaternary structure, homodimer. The cofactor is Mg(2+).

It is found in the cytoplasm. The enzyme catalyses IMP + L-aspartate + GTP = N(6)-(1,2-dicarboxyethyl)-AMP + GDP + phosphate + 2 H(+). It participates in purine metabolism; AMP biosynthesis via de novo pathway; AMP from IMP: step 1/2. Its function is as follows. Plays an important role in the de novo pathway of purine nucleotide biosynthesis. Catalyzes the first committed step in the biosynthesis of AMP from IMP. This is Adenylosuccinate synthetase from Polaromonas sp. (strain JS666 / ATCC BAA-500).